Reading from the N-terminus, the 419-residue chain is Phosphoglycerate kinase (419 aa).

Substrate-binding positions include 21 to 23 (DFN), Arg-36, 60 to 63 (HLGD), Arg-137, and Arg-174. ATP is bound by residues Lys-225, Gly-316, Glu-347, and 376 to 379 (GGDS).

This sequence belongs to the phosphoglycerate kinase family. As to quaternary structure, monomer.

The protein localises to the cytoplasm. The catalysed reaction is (2R)-3-phosphoglycerate + ATP = (2R)-3-phospho-glyceroyl phosphate + ADP. It functions in the pathway carbohydrate degradation; glycolysis; pyruvate from D-glyceraldehyde 3-phosphate: step 2/5. The chain is Phosphoglycerate kinase (pgk) from Treponema pallidum (strain Nichols).